We begin with the raw amino-acid sequence, 84 residues long: Small ribosomal subunit protein uS17 (84 aa).

Belongs to the universal ribosomal protein uS17 family. In terms of assembly, part of the 30S ribosomal subunit.

Functionally, one of the primary rRNA binding proteins, it binds specifically to the 5'-end of 16S ribosomal RNA. This chain is Small ribosomal subunit protein uS17, found in Moorella thermoacetica (strain ATCC 39073 / JCM 9320).